A 491-amino-acid polypeptide reads, in one-letter code: La-related protein 6 (491 aa).

The interval 1 to 87 (MAQSGGEARP…REDLEQEWKP (87 aa)) is disordered. A2 bears the N-acetylalanine mark. Positions 24 to 37 (EAEDVDELEDEEEG) are enriched in acidic residues. Phosphoserine is present on residues S56 and S58. The 92-residue stretch at 86 to 177 (KPPDEELIKK…RRTTPVPLFP (92 aa)) folds into the HTH La-type RNA-binding domain. One can recognise an RRM domain in the interval 184-296 (KMLLVYDLYL…KAVLIGMKPP (113 aa)). The Nuclear export signal motif lies at 186-193 (LLVYDLYL). Disordered stretches follow at residues 293–403 (MKPP…EEGR) and 423–491 (SSVT…RACV). The Nuclear localization signal motif lies at 296–302 (PKKKPAK). Residues 332–346 (DESSANSSSDPESNP) show a composition bias toward low complexity. Polar residues-rich tracts occupy residues 359-386 (NKLSPSGHQNLFLSPNASPCTSPWSSPL) and 444-453 (QEKSPGTSPL). One can recognise an SUZ-C domain in the interval 427 to 485 (PSGSPWVRRRRQAEMGTQEKSPGTSPLLSRKMQTADGLPVGVLRLPRGPDNTRGFHGHE). A compositionally biased stretch (basic and acidic residues) spans 482 to 491 (HGHERSRACV).

As to quaternary structure, interacts (via the HTH domain) with VIM/vimentin. Interacts (via C-terminus) with non-muscle myosin MYH10. Interacts (via C-terminus) with DHX9. As to expression, expressed in numerous tissues.

It localises to the cytoplasm. It is found in the nucleus. Its function is as follows. Regulates the coordinated translation of type I collagen alpha-1 and alpha-2 mRNAs, CO1A1 and CO1A2. Stabilizes mRNAs through high-affinity binding of a stem-loop structure in their 5' UTR. This regulation requires VIM and MYH10 filaments, and the helicase DHX9. In Homo sapiens (Human), this protein is La-related protein 6 (LARP6).